Here is a 304-residue protein sequence, read N- to C-terminus: Homoserine dehydrogenase (304 aa).

The NADP(+) site is built by Tyr-8, Asn-10, Val-11, Arg-38, Arg-39, and Ser-73. An NADPH-binding site is contributed by Tyr-8. The NADPH site is built by Val-11 and Arg-38. Position 11 (Val-11) interacts with NAD(+). Residues Ser-73, Ser-74, Thr-100, and Lys-102 each contribute to the NADPH site. Ser-73 serves as a coordination point for NAD(+). The NADP(+) site is built by Thr-100 and Lys-102. Val-129 and Thr-133 together coordinate Na(+). Residues Gly-182 and Glu-185 each coordinate NADP(+). Residues Glu-185 and Asp-196 each coordinate L-homoserine. Lys-200 functions as the Proton donor in the catalytic mechanism. Residue Gly-284 coordinates NADP(+). Gly-284 serves as a coordination point for NADPH. Gly-284 lines the NAD(+) pocket.

The protein belongs to the homoserine dehydrogenase family. As to quaternary structure, homodimer. A metal cation serves as cofactor. In terms of processing, the enzyme is activated by reductive cleavage of the interchain disulfide bond between the two subunits.

It carries out the reaction L-homoserine + NADP(+) = L-aspartate 4-semialdehyde + NADPH + H(+). The catalysed reaction is L-homoserine + NAD(+) = L-aspartate 4-semialdehyde + NADH + H(+). Its pathway is amino-acid biosynthesis; L-methionine biosynthesis via de novo pathway; L-homoserine from L-aspartate: step 3/3. It participates in amino-acid biosynthesis; L-threonine biosynthesis; L-threonine from L-aspartate: step 3/5. With respect to regulation, inhibited by cysteine. Catalyzes the conversion of L-aspartate-beta-semialdehyde (L-Asa) to L-homoserine (L-Hse), the third step in the biosynthesis of threonine and methionine from aspartate. The polypeptide is Homoserine dehydrogenase (Sulfurisphaera tokodaii (strain DSM 16993 / JCM 10545 / NBRC 100140 / 7) (Sulfolobus tokodaii)).